Reading from the N-terminus, the 1025-residue chain is Probable beta-galactosidase B (1025 aa).

Residues 1–21 form the signal peptide; it reads MATAFWLLLFLLGSLHVLTAA. Asn23 carries N-linked (GlcNAc...) asparagine glycosylation. Tyr90 lines the substrate pocket. Residue Asn100 is glycosylated (N-linked (GlcNAc...) asparagine). Positions 135, 136, 137, and 195 each coordinate substrate. Glu196 acts as the Proton donor in catalysis. Asn211 carries an N-linked (GlcNAc...) asparagine glycan. Tyr265 serves as a coordination point for substrate. Cys271 and Cys324 are disulfide-bonded. The Nucleophile role is filled by Glu308. Tyr373 lines the substrate pocket. N-linked (GlcNAc...) asparagine glycans are attached at residues Asn411, Asn456, Asn736, Asn776, Asn884, Asn925, and Asn926.

It belongs to the glycosyl hydrolase 35 family.

The protein localises to the secreted. It carries out the reaction Hydrolysis of terminal non-reducing beta-D-galactose residues in beta-D-galactosides.. Its function is as follows. Cleaves beta-linked terminal galactosyl residues from gangliosides, glycoproteins, and glycosaminoglycans. The sequence is that of Probable beta-galactosidase B (lacB) from Emericella nidulans (strain FGSC A4 / ATCC 38163 / CBS 112.46 / NRRL 194 / M139) (Aspergillus nidulans).